We begin with the raw amino-acid sequence, 378 residues long: Flagellar P-ring protein 2 (378 aa).

Positions 1–33 (MHEVSDKTNAIHPLQRVSRALFALGLLCFAAMA) are cleaved as a signal peptide.

It belongs to the FlgI family. As to quaternary structure, the basal body constitutes a major portion of the flagellar organelle and consists of four rings (L,P,S, and M) mounted on a central rod.

It is found in the periplasm. It localises to the bacterial flagellum basal body. Functionally, assembles around the rod to form the L-ring and probably protects the motor/basal body from shearing forces during rotation. This Hahella chejuensis (strain KCTC 2396) protein is Flagellar P-ring protein 2.